The primary structure comprises 60 residues: Large ribosomal subunit protein bL32 (60 aa).

Residues 1–28 (MAVQQNKKSRSKRDMRRSHDALTGPTLS) are disordered. Residues 7 to 16 (KKSRSKRDMR) show a composition bias toward basic residues.

This sequence belongs to the bacterial ribosomal protein bL32 family.

In Cellvibrio japonicus (strain Ueda107) (Pseudomonas fluorescens subsp. cellulosa), this protein is Large ribosomal subunit protein bL32.